The primary structure comprises 516 residues: Cytochrome P450 1A2 (516 aa).

Ser-69 carries O-linked (GlcNAc) serine glycosylation. Phe-226 contributes to the substrate binding site. Position 458 (Cys-458) interacts with heme.

It belongs to the cytochrome P450 family. Interacts with PGRMC1; the interaction requires PGRMC1 homodimerization. Heme is required as a cofactor.

Its subcellular location is the endoplasmic reticulum membrane. It localises to the microsome membrane. It catalyses the reaction an organic molecule + reduced [NADPH--hemoprotein reductase] + O2 = an alcohol + oxidized [NADPH--hemoprotein reductase] + H2O + H(+). The enzyme catalyses 17beta-estradiol + reduced [NADPH--hemoprotein reductase] + O2 = 2-hydroxy-17beta-estradiol + oxidized [NADPH--hemoprotein reductase] + H2O + H(+). The catalysed reaction is 17beta-estradiol + reduced [NADPH--hemoprotein reductase] + O2 = 4-hydroxy-17beta-estradiol + oxidized [NADPH--hemoprotein reductase] + H2O + H(+). It carries out the reaction estrone + reduced [NADPH--hemoprotein reductase] + O2 = 2-hydroxyestrone + oxidized [NADPH--hemoprotein reductase] + H2O + H(+). It catalyses the reaction estrone + reduced [NADPH--hemoprotein reductase] + O2 = 4-hydroxyestrone + oxidized [NADPH--hemoprotein reductase] + H2O + H(+). The enzyme catalyses cholesterol + reduced [NADPH--hemoprotein reductase] + O2 = 25-hydroxycholesterol + oxidized [NADPH--hemoprotein reductase] + H2O + H(+). The catalysed reaction is all-trans-retinol + reduced [NADPH--hemoprotein reductase] + O2 = all-trans-retinal + oxidized [NADPH--hemoprotein reductase] + 2 H2O + H(+). It carries out the reaction all-trans-retinal + reduced [NADPH--hemoprotein reductase] + O2 = all-trans-retinoate + oxidized [NADPH--hemoprotein reductase] + H2O + 2 H(+). It catalyses the reaction (5Z,8Z,11Z,14Z)-eicosatetraenoate + reduced [NADPH--hemoprotein reductase] + O2 = (14R,15S)-epoxy-(5Z,8Z,11Z)-eicosatrienoate + oxidized [NADPH--hemoprotein reductase] + H2O + H(+). The enzyme catalyses (5Z,8Z,11Z,14Z)-eicosatetraenoate + reduced [NADPH--hemoprotein reductase] + O2 = (14S,15R)-epoxy-(5Z,8Z,11Z)-eicosatrienoate + oxidized [NADPH--hemoprotein reductase] + H2O + H(+). The catalysed reaction is (5Z,8Z,11Z,14Z,17Z)-eicosapentaenoate + reduced [NADPH--hemoprotein reductase] + O2 = (17R,18S)-epoxy-(5Z,8Z,11Z,14Z)-eicosatetraenoate + oxidized [NADPH--hemoprotein reductase] + H2O + H(+). It carries out the reaction (4Z,7Z,10Z,13Z,16Z,19Z)-docosahexaenoate + reduced [NADPH--hemoprotein reductase] + O2 = (19R,20S)-epoxy-(4Z,7Z,10Z,13Z,16Z)-docosapentaenoate + oxidized [NADPH--hemoprotein reductase] + H2O + H(+). It catalyses the reaction (5S)-hydroperoxy-(6E,8Z,11Z,14Z)-eicosatetraenoate = 5-oxo-(6E,8Z,11Z,14Z)-eicosatetraenoate + H2O. The enzyme catalyses (12S)-hydroperoxy-(5Z,8Z,10E,14Z)-eicosatetraenoate = 12-oxo-(5Z,8Z,10E,14Z)-eicosatetraenoate + H2O. The catalysed reaction is (15S)-hydroperoxy-(5Z,8Z,11Z,13E)-eicosatetraenoate = 15-oxo-(5Z,8Z,11Z,13E)-eicosatetraenoate + H2O. It carries out the reaction (13S)-hydroperoxy-(9Z,11E)-octadecadienoate = 13-oxo-(9Z,11E)-octadecadienoate + H2O. It catalyses the reaction (5Z,8Z,11Z,14Z)-eicosatetraenoate + reduced [NADPH--hemoprotein reductase] + O2 = 13-hydroxy-(5Z,8Z,11Z,14Z)-eicosatetraenoate + oxidized [NADPH--hemoprotein reductase] + H2O + H(+). The enzyme catalyses (5Z,8Z,11Z,14Z)-eicosatetraenoate + reduced [NADPH--hemoprotein reductase] + O2 = 19-hydroxy-(5Z,8Z,11Z,14Z)-eicosatetraenoate + oxidized [NADPH--hemoprotein reductase] + H2O + H(+). The catalysed reaction is (9Z,12Z)-octadecadienoate + reduced [NADPH--hemoprotein reductase] + O2 = 11-hydroxy-(9Z,12Z)-octadecadienoate + oxidized [NADPH--hemoprotein reductase] + H2O + H(+). The protein operates within cofactor metabolism; retinol metabolism. It functions in the pathway steroid metabolism; cholesterol metabolism. It participates in lipid metabolism; arachidonate metabolism. Functionally, a cytochrome P450 monooxygenase involved in the metabolism of various endogenous substrates, including fatty acids, steroid hormones and vitamins. Mechanistically, uses molecular oxygen inserting one oxygen atom into a substrate, and reducing the second into a water molecule, with two electrons provided by NADPH via cytochrome P450 reductase (NADPH--hemoprotein reductase). Catalyzes the hydroxylation of carbon-hydrogen bonds. Exhibits high catalytic activity for the formation of hydroxyestrogens from estrone (E1) and 17beta-estradiol (E2), namely 2-hydroxy E1 and E2. Metabolizes cholesterol toward 25-hydroxycholesterol, a physiological regulator of cellular cholesterol homeostasis. May act as a major enzyme for all-trans retinoic acid biosynthesis in the liver. Catalyzes two successive oxidative transformation of all-trans retinol to all-trans retinal and then to the active form all-trans retinoic acid. Primarily catalyzes stereoselective epoxidation of the last double bond of polyunsaturated fatty acids (PUFA), displaying a strong preference for the (R,S) stereoisomer. Catalyzes bisallylic hydroxylation and omega-1 hydroxylation of PUFA. May also participate in eicosanoids metabolism by converting hydroperoxide species into oxo metabolites (lipoxygenase-like reaction, NADPH-independent). Plays a role in the oxidative metabolism of xenobiotics. Catalyzes the N-hydroxylation of heterocyclic amines and the O-deethylation of phenacetin. Metabolizes caffeine via N3-demethylation. The sequence is that of Cytochrome P450 1A2 (CYP1A2) from Callithrix jacchus (White-tufted-ear marmoset).